A 548-amino-acid polypeptide reads, in one-letter code: MAGTQDQSQDYFSKPTTPSTPGQAHLGNVANRIPSTIPDRESGTERAKSTHSRHRVLHGLPSTFMSYMSRRPVASSRGFSRVSSEGTASRPTAPQHSSHFHHYAPAEDGYYQENPWFGEADKKPIFSLGKPLPHKVRRKVLKPVRPDGKVDEEMAIVKEETTNEPHPGYASRTTSGQPYRVETQSSLPSRDIQRQQSRTTAAGVAHNDRRNDAGQPVFEYIPGEATPTPGHRDPASRVQSKQDNGHSPPDFKVDGEPLGHQEKPCVESGDTNANEMRNWWARLRARHPEPLAEFLATAVAIFLGLTGTLSVNLSATQSQPYGTYETSCWAWGFAWMFGIYLGGGVSGAHMNPAISVSLSIFRGFPWRQCVIYVFVQFIASIVAGALAYAMYADSINHVDPDMTKMSMTFFSTPREWVTLKSAFFNQVVGSAIMMIAVFALGDDQNNPPGAGMHALVLGFLVTTLKFTLGYNIGSALNPASDFGPRVIAYAVGFRGDNVFHSGWWFYGPWAATLIGSLLGCTLYDGFVFVGSESPVNFRVDKRVKKLFN.

Residues 1 to 22 show a composition bias toward polar residues; it reads MAGTQDQSQDYFSKPTTPSTPG. Disordered regions lie at residues 1-63, 76-101, and 158-270; these read MAGT…LPST, SRGF…SHFH, and KEET…ESGD. Residues 1-290 lie on the Cytoplasmic side of the membrane; the sequence is MAGTQDQSQD…ARLRARHPEP (290 aa). A compositionally biased stretch (basic and acidic residues) spans 38–48; it reads PDRESGTERAK. Polar residues-rich tracts occupy residues 77 to 97 and 171 to 200; these read RGFS…PQHS and SRTT…SRTT. The span at 249-265 shows a compositional bias: basic and acidic residues; it reads PDFKVDGEPLGHQEKPC. The helical transmembrane segment at 291–311 threads the bilayer; sequence LAEFLATAVAIFLGLTGTLSV. N312 is a glycosylation site (N-linked (GlcNAc...) asparagine). Residues 312 to 327 lie on the Extracellular side of the membrane; the sequence is NLSATQSQPYGTYETS. Residues 328 to 348 traverse the membrane as a helical segment; sequence CWAWGFAWMFGIYLGGGVSGA. The Cytoplasmic segment spans residues 349-369; that stretch reads HMNPAISVSLSIFRGFPWRQC. Positions 351-353 match the NPA 1 motif; it reads NPA. Residues 370–390 form a helical membrane-spanning segment; sequence VIYVFVQFIASIVAGALAYAM. Over 391–420 the chain is Extracellular; that stretch reads YADSINHVDPDMTKMSMTFFSTPREWVTLK. A helical membrane pass occupies residues 421-441; that stretch reads SAFFNQVVGSAIMMIAVFALG. Residues 442 to 448 lie on the Cytoplasmic side of the membrane; it reads DDQNNPP. Residues 449–469 traverse the membrane as a helical segment; it reads GAGMHALVLGFLVTTLKFTLG. At 470 to 508 the chain is on the extracellular side; that stretch reads YNIGSALNPASDFGPRVIAYAVGFRGDNVFHSGWWFYGP. An NPA 2 motif is present at residues 477 to 479; the sequence is NPA. A helical membrane pass occupies residues 509-529; that stretch reads WAATLIGSLLGCTLYDGFVFV. Residues 530–548 are Cytoplasmic-facing; the sequence is GSESPVNFRVDKRVKKLFN.

Belongs to the MIP/aquaporin (TC 1.A.8) family.

It is found in the membrane. It catalyses the reaction H2O(in) = H2O(out). It carries out the reaction glycerol(in) = glycerol(out). In terms of biological role, probable water/glycerol channel that may have redundant functions with FgAQP2. The protein is Probable aquaglyceroporin-4 of Gibberella zeae (strain ATCC MYA-4620 / CBS 123657 / FGSC 9075 / NRRL 31084 / PH-1) (Wheat head blight fungus).